Consider the following 554-residue polypeptide: Phosphomethylpyrimidine synthase (554 aa).

Substrate is bound by residues asparagine 188, methionine 217, tyrosine 246, histidine 282, 302–304 (SRG), 343–346 (DGLR), and glutamate 382. Histidine 386 serves as a coordination point for Zn(2+). Tyrosine 409 contributes to the substrate binding site. Histidine 450 provides a ligand contact to Zn(2+). Residues cysteine 530, cysteine 533, and cysteine 538 each coordinate [4Fe-4S] cluster.

Belongs to the ThiC family. As to quaternary structure, homodimer. It depends on [4Fe-4S] cluster as a cofactor.

The catalysed reaction is 5-amino-1-(5-phospho-beta-D-ribosyl)imidazole + S-adenosyl-L-methionine = 4-amino-2-methyl-5-(phosphooxymethyl)pyrimidine + CO + 5'-deoxyadenosine + formate + L-methionine + 3 H(+). Its pathway is cofactor biosynthesis; thiamine diphosphate biosynthesis. In terms of biological role, catalyzes the synthesis of the hydroxymethylpyrimidine phosphate (HMP-P) moiety of thiamine from aminoimidazole ribotide (AIR) in a radical S-adenosyl-L-methionine (SAM)-dependent reaction. This Coxiella burnetii (strain RSA 493 / Nine Mile phase I) protein is Phosphomethylpyrimidine synthase.